The following is a 91-amino-acid chain: Bacterial microcompartment shell protein PduJ (91 aa).

One can recognise a BMC domain in the interval Ala4 to Pro88.

Belongs to the bacterial microcompartments protein family. In terms of assembly, homohexamer with a central pore. Interacts with PduP, which targets PduP to the BMC. Interacts with shell protein PduA.

Its subcellular location is the bacterial microcompartment. It participates in polyol metabolism; 1,2-propanediol degradation. In terms of biological role, one of the major shell proteins of the bacterial microcompartment (BMC) dedicated to 1,2-propanediol (1,2-PD) degradation. At least one of PduA or PduJ is required for BMC assembly; it must be encoded as the first gene in the pdu operon. Required for structural integrity of BMCs and to mitigate propionaldehyde toxicity, probably joins facets responsible for BMC closure. Probably the hub for binding multiple enzymes to the interior of the BMC. Functionally, expression of a cosmid containing the full 21-gene pdu operon in E.coli allows E.coli to grow on 1,2-PD with the appearance of BMCs in its cytoplasm. Overexpression of this protein leads to an internal structure with a whorled architecture. The 1,2-PD-specific bacterial microcompartment (BMC) concentrates low levels of 1,2-PD catabolic enzymes, concentrates volatile reaction intermediates thus enhancing pathway flux and keeps the level of toxic, mutagenic propionaldehyde low. This Citrobacter freundii protein is Bacterial microcompartment shell protein PduJ.